Consider the following 87-residue polypeptide: Small ribosomal subunit protein uS17 (87 aa).

Belongs to the universal ribosomal protein uS17 family. Part of the 30S ribosomal subunit.

Functionally, one of the primary rRNA binding proteins, it binds specifically to the 5'-end of 16S ribosomal RNA. The protein is Small ribosomal subunit protein uS17 of Alcanivorax borkumensis (strain ATCC 700651 / DSM 11573 / NCIMB 13689 / SK2).